We begin with the raw amino-acid sequence, 49 residues long: Large ribosomal subunit protein bL33A (49 aa).

It belongs to the bacterial ribosomal protein bL33 family.

The protein is Large ribosomal subunit protein bL33A of Geobacillus kaustophilus (strain HTA426).